A 346-amino-acid chain; its full sequence is Bifunctional phosphatase IMPL2, chloroplastic (346 aa).

Residues Met-1–Met-61 constitute a chloroplast transit peptide. Mg(2+)-binding residues include Glu-147, Asp-165, and Asp-168. Position 147 (Glu-147) interacts with substrate. Residues Ile-167–Thr-170, Gly-263–Asp-265, Glu-282, and Asp-289 contribute to the substrate site. Position 289 (Asp-289) interacts with Mg(2+).

Belongs to the inositol monophosphatase superfamily. Mg(2+) serves as cofactor. As to expression, ubiquitous. High expression in roots. Expressed in pistil and seed endosperm.

It localises to the plastid. The protein localises to the chloroplast. The catalysed reaction is a myo-inositol phosphate + H2O = myo-inositol + phosphate. It catalyses the reaction L-histidinol phosphate + H2O = L-histidinol + phosphate. It carries out the reaction beta-L-galactose 1-phosphate + H2O = L-galactose + phosphate. It functions in the pathway amino-acid biosynthesis; L-histidine biosynthesis; L-histidine from 5-phospho-alpha-D-ribose 1-diphosphate: step 8/9. The protein operates within polyol metabolism; myo-inositol biosynthesis; myo-inositol from D-glucose 6-phosphate: step 2/2. In terms of biological role, phosphatase required for histidine production. Also acts on L-galactose 1-phosphate (L-Gal 1-P), D-myoinositol 3-phosphate (D-Ins 3-P) and D-myoinositol 1-phosphate (D-Ins 1-P). In Arabidopsis thaliana (Mouse-ear cress), this protein is Bifunctional phosphatase IMPL2, chloroplastic (HISN7).